Consider the following 661-residue polypeptide: UvrABC system protein B (661 aa).

A Helicase ATP-binding domain is found at 25–178 (EGILKGEKFQ…DEVIRELIRM (154 aa)). 38–45 (GVTGSGKT) is an ATP binding site. A Beta-hairpin motif is present at residues 91-114 (YYDYYQPEAYIPETDTYIEKDSSI). Positions 429–591 (QIDHLIGEIR…IVPQTVRKGI (163 aa)) constitute a Helicase C-terminal domain. The 36-residue stretch at 625-660 (EEYIKELEQQMKRFAIELEFEKAAKIRDKIFELKKL) folds into the UVR domain.

The protein belongs to the UvrB family. As to quaternary structure, forms a heterotetramer with UvrA during the search for lesions. Interacts with UvrC in an incision complex.

Its subcellular location is the cytoplasm. Functionally, the UvrABC repair system catalyzes the recognition and processing of DNA lesions. A damage recognition complex composed of 2 UvrA and 2 UvrB subunits scans DNA for abnormalities. Upon binding of the UvrA(2)B(2) complex to a putative damaged site, the DNA wraps around one UvrB monomer. DNA wrap is dependent on ATP binding by UvrB and probably causes local melting of the DNA helix, facilitating insertion of UvrB beta-hairpin between the DNA strands. Then UvrB probes one DNA strand for the presence of a lesion. If a lesion is found the UvrA subunits dissociate and the UvrB-DNA preincision complex is formed. This complex is subsequently bound by UvrC and the second UvrB is released. If no lesion is found, the DNA wraps around the other UvrB subunit that will check the other stand for damage. This is UvrABC system protein B from Caldicellulosiruptor saccharolyticus (strain ATCC 43494 / DSM 8903 / Tp8T 6331).